Consider the following 662-residue polypeptide: Transforming growth factor beta activator LRRC32 (662 aa).

The first 17 residues, 1–17, serve as a signal peptide directing secretion; that stretch reads MRPQILLLLALLTLGLA. Over 18–625 the chain is Extracellular; the sequence is AQRQDKVPCK…EDCEKGGLKN (608 aa). An LRRNT domain is found at 21 to 48; that stretch reads QDKVPCKMVDKKVSCQGLGLLQVPSVLP. 10 LRR repeats span residues 50 to 73, 74 to 95, 98 to 119, 125 to 145, 150 to 171, 174 to 195, 198 to 219, 220 to 240, 244 to 265, and 266 to 286; these read DTET…GFYT, ALRH…AFQA, HLEH…SAGG, RVTS…ERLL, SLHT…TFRD, VLEQ…AFEG, RLTH…SLQQ, LRVL…SQPQ, QLTW…AALP, and RLIY…PPQD. Asn203 carries an N-linked (GlcNAc...) asparagine glycan. N-linked (GlcNAc...) asparagine glycosylation is found at Asn271 and Asn308. 10 LRR repeats span residues 316–339, 340–361, 364–385, 387–408, 411–432, 444–465, 467–488, 492–513, 515–536, and 537–558; these read QLLN…EHLT, SLCF…RSGS, CLML…ARAL, SLRT…TFAN, SLQR…DEPG, SLHS…AFLH, PLTE…ALGG, SLEV…LPCF, CLKR…TQAV, and SLEV…AMGG. N-linked (GlcNAc...) asparagine glycosylation is present at Asn345. The N-linked (GlcNAc...) asparagine glycan is linked to Asn545. Residues 571 to 620 form the LRRCT domain; it reads NPLSCCGNGWLAAQLHQGRVDVDATQDLICRFSSQEEVSLSHVRPEDCEK. Residues 626 to 646 traverse the membrane as a helical segment; sequence INLIIILTFILVSAILLTTLA. Residues 647-662 lie on the Cytoplasmic side of the membrane; sequence TCCCVRRQKFNQQYKA.

The protein belongs to the LRRC32/LRRC33 family. Interacts with TGFB1; associates via disulfide bonds with the Latency-associated peptide chain (LAP) regulatory chain of TGFB1, leading to regulate activation of TGF-beta-1. Interacts with TGFB2. Interacts with TGFB3; associates via disulfide bonds with the Latency-associated peptide chain (LAP) regulatory chain of TGFB3, leading to regulate activation of TGF-beta-3. Interacts with LAPTM4B; decreases TGFB1 production in regulatory T-cells.

Its subcellular location is the cell membrane. It localises to the cell surface. Key regulator of transforming growth factor beta (TGFB1, TGFB2 and TGFB3) that controls TGF-beta activation by maintaining it in a latent state during storage in extracellular space. Associates specifically via disulfide bonds with the Latency-associated peptide (LAP), which is the regulatory chain of TGF-beta, and regulates integrin-dependent activation of TGF-beta. Able to outcompete LTBP1 for binding to LAP regulatory chain of TGF-beta. Controls activation of TGF-beta-1 (TGFB1) on the surface of activated regulatory T-cells (Tregs). Required for epithelial fusion during palate development by regulating activation of TGF-beta-3 (TGFB3). The polypeptide is Transforming growth factor beta activator LRRC32 (Pongo abelii (Sumatran orangutan)).